The sequence spans 347 residues: Putative histone PARylation factor 1-like (347 aa).

Position 1 is an N-acetylmethionine (Met1). N6-acetyllysine is present on residues Lys187 and Lys234.

This sequence belongs to the HPF1 family.

The protein is Putative histone PARylation factor 1-like of Homo sapiens (Human).